We begin with the raw amino-acid sequence, 102 residues long: Aspartyl/glutamyl-tRNA(Asn/Gln) amidotransferase subunit C (102 aa).

Belongs to the GatC family. Heterotrimer of A, B and C subunits.

It catalyses the reaction L-glutamyl-tRNA(Gln) + L-glutamine + ATP + H2O = L-glutaminyl-tRNA(Gln) + L-glutamate + ADP + phosphate + H(+). The enzyme catalyses L-aspartyl-tRNA(Asn) + L-glutamine + ATP + H2O = L-asparaginyl-tRNA(Asn) + L-glutamate + ADP + phosphate + 2 H(+). Functionally, allows the formation of correctly charged Asn-tRNA(Asn) or Gln-tRNA(Gln) through the transamidation of misacylated Asp-tRNA(Asn) or Glu-tRNA(Gln) in organisms which lack either or both of asparaginyl-tRNA or glutaminyl-tRNA synthetases. The reaction takes place in the presence of glutamine and ATP through an activated phospho-Asp-tRNA(Asn) or phospho-Glu-tRNA(Gln). In Leuconostoc citreum (strain KM20), this protein is Aspartyl/glutamyl-tRNA(Asn/Gln) amidotransferase subunit C.